We begin with the raw amino-acid sequence, 215 residues long: Large ribosomal subunit protein uL4 (215 aa).

The tract at residues threonine 46–arginine 72 is disordered. Residues serine 56 to alanine 71 are compositionally biased toward gly residues.

It belongs to the universal ribosomal protein uL4 family. As to quaternary structure, part of the 50S ribosomal subunit.

One of the primary rRNA binding proteins, this protein initially binds near the 5'-end of the 23S rRNA. It is important during the early stages of 50S assembly. It makes multiple contacts with different domains of the 23S rRNA in the assembled 50S subunit and ribosome. In terms of biological role, forms part of the polypeptide exit tunnel. The protein is Large ribosomal subunit protein uL4 of Helicobacter pylori (strain G27).